Reading from the N-terminus, the 338-residue chain is Glyceraldehyde-3-phosphate dehydrogenase (338 aa).

NAD(+) contacts are provided by residues 11-12 (TI) and Gly-111. 140 to 142 (SCN) is a D-glyceraldehyde 3-phosphate binding site. Cys-141 acts as the Nucleophile in catalysis. Arg-169 lines the NAD(+) pocket. D-glyceraldehyde 3-phosphate is bound at residue 195 to 196 (HG). Gln-302 contributes to the NAD(+) binding site.

Belongs to the glyceraldehyde-3-phosphate dehydrogenase family. As to quaternary structure, homotetramer.

It is found in the cytoplasm. The enzyme catalyses D-glyceraldehyde 3-phosphate + phosphate + NADP(+) = (2R)-3-phospho-glyceroyl phosphate + NADPH + H(+). It catalyses the reaction D-glyceraldehyde 3-phosphate + phosphate + NAD(+) = (2R)-3-phospho-glyceroyl phosphate + NADH + H(+). The protein operates within carbohydrate degradation; glycolysis; pyruvate from D-glyceraldehyde 3-phosphate: step 1/5. This chain is Glyceraldehyde-3-phosphate dehydrogenase (gap), found in Methanobacterium formicicum.